The chain runs to 31 residues: Photosystem II reaction center protein T (31 aa).

Residues 3–23 (ALVYTFLLVGTLGIIFFAIFF) form a helical membrane-spanning segment.

It belongs to the PsbT family. PSII is composed of 1 copy each of membrane proteins PsbA, PsbB, PsbC, PsbD, PsbE, PsbF, PsbH, PsbI, PsbJ, PsbK, PsbL, PsbM, PsbT, PsbY, PsbZ, Psb30/Ycf12, at least 3 peripheral proteins of the oxygen-evolving complex and a large number of cofactors. It forms dimeric complexes.

The protein resides in the plastid. It is found in the chloroplast thylakoid membrane. Found at the monomer-monomer interface of the photosystem II (PS II) dimer, plays a role in assembly and dimerization of PSII. PSII is a light-driven water plastoquinone oxidoreductase, using light energy to abstract electrons from H(2)O, generating a proton gradient subsequently used for ATP formation. The protein is Photosystem II reaction center protein T of Mesostigma viride (Green alga).